The chain runs to 244 residues: tRNA pseudouridine synthase B (244 aa).

Residue Asp46 is the Nucleophile of the active site.

It belongs to the pseudouridine synthase TruB family. Type 1 subfamily.

It carries out the reaction uridine(55) in tRNA = pseudouridine(55) in tRNA. Its function is as follows. Responsible for synthesis of pseudouridine from uracil-55 in the psi GC loop of transfer RNAs. The protein is tRNA pseudouridine synthase B of Bordetella bronchiseptica (strain ATCC BAA-588 / NCTC 13252 / RB50) (Alcaligenes bronchisepticus).